Consider the following 763-residue polypeptide: DNA-binding protein SATB1 (763 aa).

Residues 1–15 (MDHLNEATQGKEHSE) are compositionally biased toward basic and acidic residues. The tract at residues 1 to 54 (MDHLNEATQGKEHSEMSNNVSDPKGPPAKIARLEQNGSPLGRGRLGSTGAKMQG) is disordered. The Nuclear localization signal signature appears at 20-40 (VSDPKGPPAKIARLEQNGSPL). Residue Lys-51 forms a Glycyl lysine isopeptide (Lys-Gly) (interchain with G-Cter in SUMO2) linkage. Residues 71 to 172 (GTMLPVFCVV…VVTLKIQLHS (102 aa)) form the CMP domain. Position 136 is an N6-acetyllysine (Lys-136). A Protein interaction motif is present at residues 139–143 (PVPLS). One can recognise a CUTL domain in the interval 175–248 (KLEDLPPEQW…WYKHFKKTKD (74 aa)). Ser-185 is modified (phosphoserine). The nuclear matrix targeting sequence (NMTS) stretch occupies residues 224–278 (YYANVSAAKCQEFGRWYKHFKKTKDMMVEMDSLSELSQQGANHVNFGQQPVPGNT). Residues 266–296 (HVNFGQQPVPGNTAEQPPSPAQLSHGSQPSV) are compositionally biased toward polar residues. Residues 266-307 (HVNFGQQPVPGNTAEQPPSPAQLSHGSQPSVRTPLPNLHPGL) are disordered. DNA-binding regions (CUT) lie at residues 361-448 (LEQQ…QDER) and 484-571 (NGKP…EQES). Residues Gln-390, 400 to 410 (RTQGLLSEILR), and Asn-425 each bind DNA. Residues 591 to 607 (QIQQQQQQQQQQQQQQQ) are compositionally biased toward low complexity. Residues 591–649 (QIQQQQQQQQQQQQQQQAPPPPQPQQQPQTGPRLPPRQPTVASPAESDEENRQKTRPRT) form a disordered region. Ser-637 is subject to Phosphoserine. A DNA-binding region (homeobox) is located at residues 645–704 (TRPRTKISVEALGILQSFIQDVGLYPDEEAIQTLSAQLDLPKYTIIKFFQNQRYYLKHHG). Residue Lys-744 forms a Glycyl lysine isopeptide (Lys-Gly) (interchain with G-Cter in SUMO) linkage.

This sequence belongs to the CUT homeobox family. In terms of assembly, interacts with CUX1 (via DNA-binding domains); the interaction inhibits the attachment of both proteins to DNA. Homodimer. Part of the nuclear protein complex gamma-globin promoter and enhancer binding factor (gamma-PE) composed at least of SATB1 and HOXB2. Interaction with CtBP1 when not acetylated stabilizes attachment to DNA and promotes transcription repression. Interacts with PCAF. Interacts with sumoylated PML and HDAC1 via the CMP domain. Interacts also with DYNLT3 and POLR2J2. Binds to EP300. As to quaternary structure, (Microbial infection) Interacts (via the CMP domain) with HIV-1 Tat. Sumoylated. Sumoylation promotes cleavage by caspases. In terms of processing, phosphorylated by PKC. Acetylated by PCAF. Phosphorylated form interacts with HDAC1, but unphosphorylated form interacts with PCAF. DNA binding properties are activated by phosphorylation and inactivated by acetylation. In opposition, gene expression is down-regulated by phosphorylation but up-regulated by acetylation. Post-translationally, cleaved at Asp-254 by caspase-3 and caspase-6 during T-cell apoptosis in thymus and during B-cell stimulation. The cleaved forms cannot dimerize and lose transcription regulation function because of impaired DNA and chromatin association. As to expression, expressed predominantly in thymus.

The protein localises to the nucleus matrix. The protein resides in the nucleus. It localises to the PML body. Its function is as follows. Crucial silencing factor contributing to the initiation of X inactivation mediated by Xist RNA that occurs during embryogenesis and in lymphoma. Binds to DNA at special AT-rich sequences, the consensus SATB1-binding sequence (CSBS), at nuclear matrix- or scaffold-associated regions. Thought to recognize the sugar-phosphate structure of double-stranded DNA. Transcriptional repressor controlling nuclear and viral gene expression in a phosphorylated and acetylated status-dependent manner, by binding to matrix attachment regions (MARs) of DNA and inducing a local chromatin-loop remodeling. Acts as a docking site for several chromatin remodeling enzymes (e.g. PML at the MHC-I locus) and also by recruiting corepressors (HDACs) or coactivators (HATs) directly to promoters and enhancers. Modulates genes that are essential in the maturation of the immune T-cell CD8SP from thymocytes. Required for the switching of fetal globin species, and beta- and gamma-globin genes regulation during erythroid differentiation. Plays a role in chromatin organization and nuclear architecture during apoptosis. Interacts with the unique region (UR) of cytomegalovirus (CMV). Alu-like motifs and SATB1-binding sites provide a unique chromatin context which seems preferentially targeted by the HIV-1 integration machinery. Moreover, HIV-1 Tat may overcome SATB1-mediated repression of IL2 and IL2RA (interleukin) in T-cells by binding to the same domain than HDAC1. Delineates specific epigenetic modifications at target gene loci, directly up-regulating metastasis-associated genes while down-regulating tumor-suppressor genes. Reprograms chromatin organization and the transcription profiles of breast tumors to promote growth and metastasis. Promotes neuronal differentiation of neural stem/progenitor cells in the adult subventricular zone, possibly by positively regulating the expression of NEUROD1. The chain is DNA-binding protein SATB1 from Homo sapiens (Human).